The following is a 735-amino-acid chain: uncharacterized protein (735 aa).

The GAF domain occupies 25 to 175; that stretch reads DLSCLSPDLL…CIAAVLAGLL (151 aa). The 71-residue stretch at 185-255 folds into the PAS domain; the sequence is SEAARRAMLD…RQGFMRHLAT (71 aa). Positions 263–313 constitute a PAC domain; it reads RLVEVEALRADGSVFPAELTVNEHRAGGRRLFSAFVRDISDRITSRRALER. In terms of domain architecture, GGDEF spans 342–464; the sequence is GAVVLMLRDL…DGHLLHFAEH (123 aa). The region spanning 472–732 is the EAL domain; sequence RLELEMALRD…VAGTLPETLA (261 aa).

This is an uncharacterized protein from Azorhizobium caulinodans (strain ATCC 43989 / DSM 5975 / JCM 20966 / LMG 6465 / NBRC 14845 / NCIMB 13405 / ORS 571).